The sequence spans 330 residues: Delta-aminolevulinic acid dehydratase (330 aa).

Zn(2+)-binding residues include Cys-122, Cys-124, His-131, and Cys-132. The active-site Schiff-base intermediate with substrate is Lys-199. Lys-199 bears the N6-succinyllysine mark. A 5-aminolevulinate-binding site is contributed by Arg-209. Ser-215 is subject to Phosphoserine. Arg-221 contacts 5-aminolevulinate. Residue Cys-223 coordinates Zn(2+). The Schiff-base intermediate with substrate role is filled by Lys-252. Lys-252 is modified (N6-succinyllysine). Ser-279 contributes to the 5-aminolevulinate binding site.

This sequence belongs to the ALAD family. As to quaternary structure, homooctamer; active form. Homohexamer; low activity form. Zn(2+) is required as a cofactor.

It localises to the cytoplasm. It is found in the cytosol. The enzyme catalyses 2 5-aminolevulinate = porphobilinogen + 2 H2O + H(+). The protein operates within porphyrin-containing compound metabolism; protoporphyrin-IX biosynthesis; coproporphyrinogen-III from 5-aminolevulinate: step 1/4. Can alternate between a fully active homooctamer and a low-activity homohexamer. A bound magnesium ion may promote the assembly of the fully active homooctamer. The magnesium-binding site is absent in the low-activity homohexamer. Inhibited by compounds that favor the hexameric state. Inhibited by divalent lead ions. The lead ions partially displace the zinc cofactor. Functionally, catalyzes an early step in the biosynthesis of tetrapyrroles. Binds two molecules of 5-aminolevulinate per subunit, each at a distinct site, and catalyzes their condensation to form porphobilinogen. This chain is Delta-aminolevulinic acid dehydratase (ALAD), found in Pongo abelii (Sumatran orangutan).